A 724-amino-acid chain; its full sequence is Phenylalanine ammonia-lyase (724 aa).

The active-site Proton donor/acceptor is the Tyr-99. Positions 204–206 form a cross-link, 5-imidazolinone (Ala-Gly); sequence ASG. Residue Ser-205 is modified to 2,3-didehydroalanine (Ser). Asn-265, Gln-355, Arg-361, Asn-391, Lys-462, Glu-490, and Asn-493 together coordinate (E)-cinnamate.

This sequence belongs to the PAL/histidase family. As to quaternary structure, homotetramer. Contains an active site 4-methylidene-imidazol-5-one (MIO), which is formed autocatalytically by cyclization and dehydration of residues Ala-Ser-Gly.

It is found in the cytoplasm. It catalyses the reaction L-phenylalanine = (E)-cinnamate + NH4(+). Its pathway is phenylpropanoid metabolism; trans-cinnamate biosynthesis; trans-cinnamate from L-phenylalanine: step 1/1. Catalyzes the non-oxidative deamination of L-phenylalanine to form trans-cinnamic acid and a free ammonium ion. Facilitates the commitment step in phenylpropanoid pathways that produce secondary metabolites such as lignins, coumarins and flavonoids. In Flammulina velutipes (Agaricus velutipes), this protein is Phenylalanine ammonia-lyase.